The following is a 262-amino-acid chain: Type III pantothenate kinase (262 aa).

9–16 (DIGNTNIV) provides a ligand contact to ATP. Residues Y103 and 110-113 (GVDR) contribute to the substrate site. D112 serves as the catalytic Proton acceptor. K(+) is bound at residue D132. T135 is a binding site for ATP. T187 is a binding site for substrate.

This sequence belongs to the type III pantothenate kinase family. As to quaternary structure, homodimer. The cofactor is NH4(+). It depends on K(+) as a cofactor.

It is found in the cytoplasm. It catalyses the reaction (R)-pantothenate + ATP = (R)-4'-phosphopantothenate + ADP + H(+). It functions in the pathway cofactor biosynthesis; coenzyme A biosynthesis; CoA from (R)-pantothenate: step 1/5. Functionally, catalyzes the phosphorylation of pantothenate (Pan), the first step in CoA biosynthesis. The polypeptide is Type III pantothenate kinase (Finegoldia magna (strain ATCC 29328 / DSM 20472 / WAL 2508) (Peptostreptococcus magnus)).